Here is a 1460-residue protein sequence, read N- to C-terminus: DNA-directed RNA polymerase III subunit RPC1 (1460 aa).

Residues cysteine 67, cysteine 70, cysteine 77, histidine 80, cysteine 107, cysteine 110, and cysteine 154 each contribute to the Zn(2+) site. Positions 511, 513, and 515 each coordinate Mg(2+). Residues 858–870 are bridging helix; the sequence is PPEFLFHAISGRE.

It belongs to the RNA polymerase beta' chain family. As to quaternary structure, component of the RNA polymerase III (Pol III) complex consisting of 17 subunits.

Its subcellular location is the nucleus. It carries out the reaction RNA(n) + a ribonucleoside 5'-triphosphate = RNA(n+1) + diphosphate. Its function is as follows. DNA-dependent RNA polymerase catalyzes the transcription of DNA into RNA using the four ribonucleoside triphosphates as substrates. Largest and catalytic core component of RNA polymerase III which synthesizes small RNAs, such as 5S rRNA and tRNAs. Forms the polymerase active center together with the second largest subunit. A single-stranded DNA template strand of the promoter is positioned within the central active site cleft of Pol III. A bridging helix emanates from RPC1 and crosses the cleft near the catalytic site and is thought to promote translocation of Pol III by acting as a ratchet that moves the RNA-DNA hybrid through the active site by switching from straight to bent conformations at each step of nucleotide addition. This chain is DNA-directed RNA polymerase III subunit RPC1 (RPO31), found in Saccharomyces cerevisiae (strain ATCC 204508 / S288c) (Baker's yeast).